We begin with the raw amino-acid sequence, 856 residues long: Protein phosphatase 2C 32 (856 aa).

Phosphoserine occurs at positions 152, 189, and 201. Positions 269–835 (ESCLESNRNL…DDVSVMVVSL (567 aa)) constitute a PPM-type phosphatase domain. Residues aspartate 307 and glycine 308 each contribute to the Mn(2+) site. 3 disordered regions span residues 340-373 (PSED…KSVV), 388-407 (GNTD…GPGK), and 446-485 (NPST…QISS). Over residues 395-407 (ADGPPGDSAGPGK) the composition is skewed to low complexity. The segment covering 471–485 (NSGQRHGTKKSQISS) has biased composition (polar residues). Residues aspartate 763 and aspartate 826 each contribute to the Mn(2+) site.

The protein belongs to the PP2C family. It depends on Mg(2+) as a cofactor. Mn(2+) is required as a cofactor. Expressed in roots, leaves, stems, inflorescences, flowers and throughout the shoot meristem.

The protein resides in the nucleus. It carries out the reaction O-phospho-L-seryl-[protein] + H2O = L-seryl-[protein] + phosphate. The enzyme catalyses O-phospho-L-threonyl-[protein] + H2O = L-threonyl-[protein] + phosphate. Its activity is regulated as follows. Insensitive to okadaic acid. Functionally, involved in the regulation of pedicel length and of CLAVATA pathways controlling stem cell identity at shoot and flower meristems. In Arabidopsis thaliana (Mouse-ear cress), this protein is Protein phosphatase 2C 32 (POL).